The primary structure comprises 182 residues: UPF0397 protein BCA_2731 (182 aa).

Helical transmembrane passes span 9–29 (VVAI…GFSI), 40–60 (AILT…IGLI), 71–91 (WGIW…MGLI), 114–134 (ITGL…DIIV), and 142–162 (IVIQ…VLGL).

The protein belongs to the UPF0397 family.

The protein resides in the cell membrane. The sequence is that of UPF0397 protein BCA_2731 from Bacillus cereus (strain 03BB102).